We begin with the raw amino-acid sequence, 262 residues long: Type III pantothenate kinase (262 aa).

6–13 (DVGNTNAV) contributes to the ATP binding site. Substrate is bound by residues Tyr100 and 107–110 (GADR). Asp109 serves as the catalytic Proton acceptor. Asp129 lines the K(+) pocket. Thr132 serves as a coordination point for ATP. Thr184 contributes to the substrate binding site.

Belongs to the type III pantothenate kinase family. Homodimer. The cofactor is NH4(+). K(+) is required as a cofactor.

The protein localises to the cytoplasm. The catalysed reaction is (R)-pantothenate + ATP = (R)-4'-phosphopantothenate + ADP + H(+). It participates in cofactor biosynthesis; coenzyme A biosynthesis; CoA from (R)-pantothenate: step 1/5. Its function is as follows. Catalyzes the phosphorylation of pantothenate (Pan), the first step in CoA biosynthesis. The polypeptide is Type III pantothenate kinase (Bacillus anthracis (strain A0248)).